Reading from the N-terminus, the 483-residue chain is Pre-glycoprotein polyprotein GP complex (483 aa).

Gly2 carries the N-myristoyl glycine; by host lipid modification. Residues 2-17 (GQFISFMQEIPIFLQE) are Extracellular-facing. A helical transmembrane segment spans residues 18–32 (ALNIALVAVSLICIV). A topological domain (cytoplasmic) is located at residue Lys33. Residues 34–53 (GLVNLYRCGLFQLMVFLVLA) form a helical membrane-spanning segment. Extracellular-side segments run 54–58 (GRSCS) and 59–422 (EETF…TLVD). Zn(2+) is bound at residue Cys57. Asn83 and Asn95 each carry an N-linked (GlcNAc...) asparagine; by host glycan. Cystine bridges form between Cys92-Cys224, Cys134-Cys162, Cys205-Cys211, Cys269-Cys282, Cys291-Cys300, and Cys354-Cys375. Residues Asn164 and Asn176 are each glycosylated (N-linked (GlcNAc...) asparagine; by host). N-linked (GlcNAc...) asparagine; by host glycosylation is found at Asn355, Asn363, Asn380, and Asn385. Residues 423 to 443 (ICFWSTVFFTSTLFLHLIGFP) traverse the membrane as a helical segment. Residues 444–483 (THEHIRGEGCPLPHRLNSMGGCRCGKYLPLKKPTIWHRRH) are Cytoplasmic-facing. Zn(2+) is bound by residues His445, His447, Cys453, His457, Cys465, Cys467, and His483.

It belongs to the arenaviridae GPC protein family. Homotetramer; disulfide-linked. In terms of assembly, homotetramer. GP2 homotetramers bind through ionic interactions with GP1 homotetramers to form the GP complex together with the stable signal peptide. The GP-C polyprotein interacts with the host protease MBTPS1/SKI-1 resulting in the polyprotein processing. In terms of processing, specific enzymatic cleavages in vivo yield mature proteins. GP-C polyprotein is cleaved in the endoplasmic reticulum by the host protease MBTPS1. Only cleaved glycoprotein is incorporated into virions. Post-translationally, the SSP remains stably associated with the GP complex following cleavage by signal peptidase and plays crucial roles in the trafficking of GP through the secretory pathway. Myristoylation is necessary for GP2-mediated fusion activity.

Its subcellular location is the virion membrane. It localises to the host endoplasmic reticulum membrane. It is found in the host Golgi apparatus membrane. The protein localises to the host cell membrane. Functionally, class I viral fusion protein that directs fusion of viral and host endosomal membranes, leading to delivery of the nucleocapsid into the cytoplasm. Membrane fusion is mediated by irreversible conformational changes induced upon acidification in the endosome. Its function is as follows. Stable signal peptide (SSP): cleaved and functions as a signal peptide. In addition, it is also retained as the third component of the GP complex. The SSP is required for efficient glycoprotein expression, post-translational maturation cleavage of GP1 and GP2, glycoprotein transport to the cell surface plasma membrane, formation of infectious virus particles, and acid pH-dependent glycoprotein-mediated cell fusion. In terms of biological role, interacts with the host receptor. The chain is Pre-glycoprotein polyprotein GP complex from Artibeus (neotropical fruit bats).